The sequence spans 316 residues: 4-hydroxy-3-methylbut-2-enyl diphosphate reductase (316 aa).

Cys-12 contributes to the [4Fe-4S] cluster binding site. Residues His-41 and His-74 each contribute to the (2E)-4-hydroxy-3-methylbut-2-enyl diphosphate site. Dimethylallyl diphosphate contacts are provided by His-41 and His-74. Residues His-41 and His-74 each coordinate isopentenyl diphosphate. Cys-96 is a binding site for [4Fe-4S] cluster. (2E)-4-hydroxy-3-methylbut-2-enyl diphosphate is bound at residue His-124. Residue His-124 coordinates dimethylallyl diphosphate. His-124 is an isopentenyl diphosphate binding site. The active-site Proton donor is Glu-126. Thr-168 contacts (2E)-4-hydroxy-3-methylbut-2-enyl diphosphate. Cys-198 provides a ligand contact to [4Fe-4S] cluster. Residues Ser-226, Ser-227, Asn-228, and Ser-270 each coordinate (2E)-4-hydroxy-3-methylbut-2-enyl diphosphate. Residues Ser-226, Ser-227, Asn-228, and Ser-270 each coordinate dimethylallyl diphosphate. Ser-226, Ser-227, Asn-228, and Ser-270 together coordinate isopentenyl diphosphate.

The protein belongs to the IspH family. [4Fe-4S] cluster serves as cofactor.

It carries out the reaction isopentenyl diphosphate + 2 oxidized [2Fe-2S]-[ferredoxin] + H2O = (2E)-4-hydroxy-3-methylbut-2-enyl diphosphate + 2 reduced [2Fe-2S]-[ferredoxin] + 2 H(+). It catalyses the reaction dimethylallyl diphosphate + 2 oxidized [2Fe-2S]-[ferredoxin] + H2O = (2E)-4-hydroxy-3-methylbut-2-enyl diphosphate + 2 reduced [2Fe-2S]-[ferredoxin] + 2 H(+). Its pathway is isoprenoid biosynthesis; dimethylallyl diphosphate biosynthesis; dimethylallyl diphosphate from (2E)-4-hydroxy-3-methylbutenyl diphosphate: step 1/1. It functions in the pathway isoprenoid biosynthesis; isopentenyl diphosphate biosynthesis via DXP pathway; isopentenyl diphosphate from 1-deoxy-D-xylulose 5-phosphate: step 6/6. Its function is as follows. Catalyzes the conversion of 1-hydroxy-2-methyl-2-(E)-butenyl 4-diphosphate (HMBPP) into a mixture of isopentenyl diphosphate (IPP) and dimethylallyl diphosphate (DMAPP). Acts in the terminal step of the DOXP/MEP pathway for isoprenoid precursor biosynthesis. This Acinetobacter baylyi (strain ATCC 33305 / BD413 / ADP1) protein is 4-hydroxy-3-methylbut-2-enyl diphosphate reductase.